The following is a 268-amino-acid chain: Small ribosomal subunit protein eS1 (268 aa).

Disordered regions lie at residues 1-21 (MAVG…KKKV) and 238-268 (GGGK…QEAV).

The protein belongs to the eukaryotic ribosomal protein eS1 family. Component of the small ribosomal subunit. Mature ribosomes consist of a small (40S) and a large (60S) subunit. The 40S subunit contains about 33 different proteins and 1 molecule of RNA (18S). The 60S subunit contains about 49 different proteins and 3 molecules of RNA (28S, 5.8S and 5S).

The protein resides in the cytoplasm. Essential for oogenesis; required for late follicle cell development. In Drosophila ananassae (Fruit fly), this protein is Small ribosomal subunit protein eS1.